Reading from the N-terminus, the 224-residue chain is Small ribosomal subunit protein uS2 (224 aa).

Residues 1 to 14 (MAEAKPAPEKEAAV) are compositionally biased toward basic and acidic residues. The disordered stretch occupies residues 1–32 (MAEAKPAPEKEAAVKTESVPVADDEAASAKEG).

This sequence belongs to the universal ribosomal protein uS2 family.

The chain is Small ribosomal subunit protein uS2 from Methanosarcina mazei (strain ATCC BAA-159 / DSM 3647 / Goe1 / Go1 / JCM 11833 / OCM 88) (Methanosarcina frisia).